The primary structure comprises 102 residues: Putative sortase YwpE (102 aa).

The Proton donor/acceptor role is filled by His-17. Cys-78 (acyl-thioester intermediate) is an active-site residue.

It belongs to the bacterial sortase family.

In terms of biological role, seems not to play a major role if any as a sortase. The polypeptide is Putative sortase YwpE (ywpE) (Bacillus subtilis (strain 168)).